A 1163-amino-acid polypeptide reads, in one-letter code: Guanylate cyclase 32E (1163 aa).

A signal peptide spans 1–25; sequence MPGPCASAAAFSCILVLLLLGCQRS. At 29–469 the chain is on the extracellular side; sequence AAGATVSSMR…LCPRKKLDWR (441 aa). N-linked (GlcNAc...) asparagine glycosylation is found at asparagine 147, asparagine 206, asparagine 368, and asparagine 390. Residues 470 to 490 form a helical membrane-spanning segment; the sequence is YLVSGPLCALVVVVAIALLIK. The Cytoplasmic portion of the chain corresponds to 491-1163; the sequence is HYRYEQTLAG…RSAPSITFRL (673 aa). The region spanning 507–800 is the Protein kinase domain; the sequence is MKDVTVINLG…IRLVRMHLKE (294 aa). One can recognise a Guanylate cyclase domain in the interval 873 to 1003; the sequence is TILFSDIVGF…DTVNTASRME (131 aa).

The protein belongs to the adenylyl cyclase class-4/guanylyl cyclase family.

It is found in the membrane. The catalysed reaction is GTP = 3',5'-cyclic GMP + diphosphate. This Drosophila melanogaster (Fruit fly) protein is Guanylate cyclase 32E (Gyc32E).